A 474-amino-acid chain; its full sequence is BPI fold-containing family B member 1 (474 aa).

Positions 1 to 21 are cleaved as a signal peptide; it reads MAGPWIITLLCGLLGATLVQA. N-linked (GlcNAc...) asparagine glycosylation is found at Asn153, Asn160, Asn263, and Asn400. Cys157 and Cys200 are oxidised to a cystine.

The protein belongs to the BPI/LBP/Plunc superfamily. Plunc family. Expressed in tongue, lung, thymus, and stomach. Expressed in epithelia of palate, anterior pharynx, trachea and upper bronchi. Expressed in distal tip of papillae in the anterior third of the tongue and in serous cells of von Ebner glands in the posterior third of the tongue. Expressed in columnar epithelium of the duodenum in embryonic gut at 16.5 dpc.

It is found in the secreted. In terms of biological role, may play a role in innate immunity in mouth, nose and lungs. Binds bacterial lipopolysaccharide (LPS) and modulates the cellular responses to LPS. May be involved in formation of the left-right axis in the node of the developing embryo. The chain is BPI fold-containing family B member 1 (Bpifb1) from Mus musculus (Mouse).